We begin with the raw amino-acid sequence, 37 residues long: Large ribosomal subunit protein bL36 (37 aa).

Belongs to the bacterial ribosomal protein bL36 family.

The protein is Large ribosomal subunit protein bL36 of Acetivibrio thermocellus (strain ATCC 27405 / DSM 1237 / JCM 9322 / NBRC 103400 / NCIMB 10682 / NRRL B-4536 / VPI 7372) (Clostridium thermocellum).